The chain runs to 211 residues: Claudin-1 (211 aa).

The Cytoplasmic portion of the chain corresponds to 1–7; sequence MANAGLQ. Residues 8-28 traverse the membrane as a helical segment; sequence LLGFILASLGWIGSIVSTALP. Residues 29–81 lie on the Extracellular side of the membrane; it reads QWKIYSYAGDNIVTAQAIYEGLWMSCVSQSTGQIQCKVFDSLLNLNSTLQATR. A disulfide bridge connects residues C54 and C64. The chain crosses the membrane as a helical span at residues 82-102; it reads ALMVIGILLGLIAIFVSTIGM. The Cytoplasmic portion of the chain corresponds to 103–115; the sequence is KCMRCLEDDEVQK. A helical membrane pass occupies residues 116–136; that stretch reads MWMAVIGGIIFLISGLATLVA. Topologically, residues 137–163 are extracellular; it reads TAWYGNRIVQEFYDPLTPINARYEFGQ. The helical transmembrane segment at 164–184 threads the bilayer; sequence ALFTGWAAASLCLLGGVLLSC. Residues 185 to 211 lie on the Cytoplasmic side of the membrane; the sequence is SCPRKTTSYPTPRPYPKPTPSSGKDYV. The interval 190–211 is disordered; sequence TTSYPTPRPYPKPTPSSGKDYV. The interactions with TJP1, TJP2, TJP3 and PATJ stretch occupies residues 210–211; that stretch reads YV.

This sequence belongs to the claudin family. Can form homo- and heteropolymers with other CLDN. Homopolymers interact with CLDN3, but not CLDN2, homopolymers. Directly interacts with TJP1/ZO-1, TJP2/ZO-2 and TJP3/ZO-3. Interacts with MPDZ and PATJ. Interacts with OCLN, CD81, CLDN4, CLDN6 and CLDN9. As to expression, detected in epidermis and liver (at protein level). Widely expressed, with highest levels in liver and kidney.

It is found in the cell junction. It localises to the tight junction. The protein resides in the cell membrane. Its subcellular location is the basolateral cell membrane. Claudins function as major constituents of the tight junction complexes that regulate the permeability of epithelia. While some claudin family members play essential roles in the formation of impermeable barriers, others mediate the permeability to ions and small molecules. Often, several claudin family members are coexpressed and interact with each other, and this determines the overall permeability. CLDN1 is required to prevent the paracellular diffusion of small molecules through tight junctions in the epidermis and is required for the normal barrier function of the skin. Required for normal water homeostasis and to prevent excessive water loss through the skin, probably via an indirect effect on the expression levels of other proteins, since CLDN1 itself seems to be dispensable for water barrier formation in keratinocyte tight junctions. In Mus musculus (Mouse), this protein is Claudin-1 (Cldn1).